A 106-amino-acid polypeptide reads, in one-letter code: Replication protein A 14 kDa subunit (106 aa).

The protein belongs to the replication factor A protein 3 family. Component of the heterotrimeric canonical replication protein A complex (RPA). Interacts with RPA1B, RPA2A, RPA2B and RPA2C.

Its subcellular location is the nucleus. In terms of biological role, as part of the replication protein A (RPA/RP-A), a single-stranded DNA-binding heterotrimeric complex, may play an essential role in DNA replication, recombination and repair. Binds and stabilizes single-stranded DNA intermediates, preventing complementary DNA reannealing and recruiting different proteins involved in DNA metabolism. The sequence is that of Replication protein A 14 kDa subunit (RPA3) from Oryza sativa subsp. japonica (Rice).